A 120-amino-acid polypeptide reads, in one-letter code: Large ribosomal subunit protein uL18 (120 aa).

The protein belongs to the universal ribosomal protein uL18 family. Part of the 50S ribosomal subunit; part of the 5S rRNA/L5/L18/L25 subcomplex. Contacts the 5S and 23S rRNAs.

In terms of biological role, this is one of the proteins that bind and probably mediate the attachment of the 5S RNA into the large ribosomal subunit, where it forms part of the central protuberance. The polypeptide is Large ribosomal subunit protein uL18 (Janthinobacterium sp. (strain Marseille) (Minibacterium massiliensis)).